Consider the following 180-residue polypeptide: Large ribosomal subunit protein uL6 (180 aa).

This sequence belongs to the universal ribosomal protein uL6 family. As to quaternary structure, part of the 50S ribosomal subunit.

In terms of biological role, this protein binds to the 23S rRNA, and is important in its secondary structure. It is located near the subunit interface in the base of the L7/L12 stalk, and near the tRNA binding site of the peptidyltransferase center. The chain is Large ribosomal subunit protein uL6 from Borrelia garinii subsp. bavariensis (strain ATCC BAA-2496 / DSM 23469 / PBi) (Borreliella bavariensis).